We begin with the raw amino-acid sequence, 492 residues long: Ethanolamine-phosphate phospho-lyase (492 aa).

Lys-280 carries the N6-(pyridoxal phosphate)lysine modification. Residues 462 to 492 form a disordered region; it reads ASDENGLVHPSNGNSHKHTSTIPLSKKTKRN.

Belongs to the class-III pyridoxal-phosphate-dependent aminotransferase family. In terms of assembly, homotetramer. Pyridoxal 5'-phosphate is required as a cofactor.

The protein resides in the mitochondrion. The enzyme catalyses phosphoethanolamine + H2O = acetaldehyde + NH4(+) + phosphate. Its function is as follows. Catalyzes the pyridoxal-phosphate-dependent breakdown of phosphoethanolamine, converting it to ammonia, inorganic phosphate and acetaldehyde. This chain is Ethanolamine-phosphate phospho-lyase (etnppl), found in Danio rerio (Zebrafish).